Consider the following 1293-residue polypeptide: Enterobactin synthase component F (1293 aa).

Residues 1–301 (MSQHLPLVAA…NVLPLGIHIA (301 aa)) are elongation/condensation. The segment at 482-887 (SYREMREQVV…ALPDVEQAVT (406 aa)) is adenylatione. A Carrier domain is found at 971–1046 (APKAGSETII…KLATIIDAEE (76 aa)). Ser-1006 is modified (O-(pantetheine 4'-phosphoryl)serine). Residues 1066–1293 (PTLFCFHPAS…GPIIRATLNR (228 aa)) are thioesterase. The active-site Proton acceptor; for thioesterase activity is His-1271.

Belongs to the ATP-dependent AMP-binding enzyme family. EntF subfamily. Proteins EntB, EntD, EntE and EntF are the component of the enterobactin synthase. Components probably do not form a stable complex. EntF acts as a catalytic monomer. Interacts with the MbtH-like protein YbdZ. YbdZ binds to the adenylation domain, but does not alter the structure of the domain. Requires pantetheine 4'-phosphate as cofactor. In terms of processing, 4'-phosphopantetheine is transferred from CoA to a specific serine of apo-EntF by EntD. Holo-EntF so formed is then acylated with seryl-AMP.

The protein resides in the cytoplasm. It catalyses the reaction 3 2,3-dihydroxybenzoate + 3 L-serine + 6 ATP = enterobactin + 6 AMP + 6 diphosphate + 4 H(+). The enzyme catalyses holo-[peptidyl-carrier protein] + L-serine + ATP = L-seryl-[peptidyl-carrier protein] + AMP + diphosphate. The protein operates within siderophore biosynthesis; enterobactin biosynthesis. With respect to regulation, adenylation activity is increased in the presence of the MbtH-like protein YbdZ. Its function is as follows. Involved in the biosynthesis of the siderophore enterobactin (enterochelin), which is a macrocyclic trimeric lactone of N-(2,3-dihydroxybenzoyl)-serine. EntF catalyzes the activation of L-serine via ATP-dependent PPi exchange reaction to form seryladenylate. Activated L-serine is loaded onto the peptidyl carrier domain via a thioester linkage to the phosphopanthetheine moiety, forming seryl-S-Ppant-EntF. EntF acts then as the sole catalyst for the formation of the three amide and three ester linkages found in enterobactin, using seryladenylate and 2,3-dihydroxybenzoate-S-Ppant-EntB (DHB-S-Ppant-EntB) as substrates, via the formation of a DHB-Ser-S-Ppant-EntF intermediate. The protein is Enterobactin synthase component F of Escherichia coli (strain K12).